A 212-amino-acid polypeptide reads, in one-letter code: Large ribosomal subunit protein uL1 (212 aa).

Belongs to the universal ribosomal protein uL1 family. As to quaternary structure, part of the 50S ribosomal subunit.

Functionally, binds directly to 23S rRNA. Probably involved in E site tRNA release. Its function is as follows. Protein L1 is also a translational repressor protein, it controls the translation of its operon by binding to its mRNA. This Haloarcula marismortui (strain ATCC 43049 / DSM 3752 / JCM 8966 / VKM B-1809) (Halobacterium marismortui) protein is Large ribosomal subunit protein uL1.